The chain runs to 96 residues: Pollen allergen Dac g 3 (96 aa).

Residues 14 to 94 (KKLVLDIKYT…AFKIGTTYTP (81 aa)) form the Expansin-like CBD domain.

The protein belongs to the expansin family. Expansin B subfamily.

It localises to the secreted. The polypeptide is Pollen allergen Dac g 3 (Dactylis glomerata (Orchard grass)).